Reading from the N-terminus, the 247-residue chain is Protein AC124 (247 aa).

The protein localises to the host cytoplasm. Its subcellular location is the host nucleus. Functionally, accelerates mortality in insect larvae. This is Protein AC124 from Lepidoptera (butterflies and moths).